We begin with the raw amino-acid sequence, 319 residues long: Thiamine-monophosphate kinase (319 aa).

4 residues coordinate Mg(2+): aspartate 28, threonine 43, threonine 44, and aspartate 45. Substrate is bound at residue histidine 52. Residue aspartate 73 participates in Mg(2+) binding. Residues tyrosine 104, 121 to 122 (GD), and arginine 145 contribute to the ATP site. Position 122 (aspartate 122) interacts with Mg(2+). Aspartate 218 is a binding site for Mg(2+). Residue serine 220 coordinates ATP. Aspartate 221 is a Mg(2+) binding site. Substrate is bound by residues glutamate 268 and tyrosine 315.

This sequence belongs to the thiamine-monophosphate kinase family.

It catalyses the reaction thiamine phosphate + ATP = thiamine diphosphate + ADP. It functions in the pathway cofactor biosynthesis; thiamine diphosphate biosynthesis; thiamine diphosphate from thiamine phosphate: step 1/1. In terms of biological role, catalyzes the ATP-dependent phosphorylation of thiamine-monophosphate (TMP) to form thiamine-pyrophosphate (TPP), the active form of vitamin B1. In Methanocaldococcus jannaschii (strain ATCC 43067 / DSM 2661 / JAL-1 / JCM 10045 / NBRC 100440) (Methanococcus jannaschii), this protein is Thiamine-monophosphate kinase.